The sequence spans 396 residues: NADH-quinone oxidoreductase subunit D 1 (396 aa).

Belongs to the complex I 49 kDa subunit family. NDH-1 is composed of 14 different subunits. Subunits NuoB, C, D, E, F, and G constitute the peripheral sector of the complex.

It localises to the cell inner membrane. The enzyme catalyses a quinone + NADH + 5 H(+)(in) = a quinol + NAD(+) + 4 H(+)(out). Its function is as follows. NDH-1 shuttles electrons from NADH, via FMN and iron-sulfur (Fe-S) centers, to quinones in the respiratory chain. The immediate electron acceptor for the enzyme in this species is believed to be ubiquinone. Couples the redox reaction to proton translocation (for every two electrons transferred, four hydrogen ions are translocated across the cytoplasmic membrane), and thus conserves the redox energy in a proton gradient. The protein is NADH-quinone oxidoreductase subunit D 1 of Sinorhizobium medicae (strain WSM419) (Ensifer medicae).